The primary structure comprises 1371 residues: Soluble scavenger receptor cysteine-rich domain-containing protein SSC5D (1371 aa).

The N-terminal stretch at 1–16 (MRGLACLLAMLVGIQA) is a signal peptide. In terms of domain architecture, SRCR 1 spans 20 to 120 (LRLADGPHGC…HEEDAGVVCV (101 aa)). 3 cysteine pairs are disulfide-bonded: C45–C109, C58–C119, and C89–C99. The segment covering 143–154 (LSGELSPSSEEP) has biased composition (low complexity). The disordered stretch occupies residues 143–200 (LSGELSPSSEEPPITHAPQPAASSQNGPRKKNPRPPKQTKSTRAPVLTNGAPHQERLR). SRCR domains are found at residues 199–299 (LRLV…LVCT) and 305–405 (IRLA…AVCD). Disulfide bonds link C224–C288, C237–C298, C268–C278, C330–C394, C343–C404, and C374–C384. N-linked (GlcNAc...) asparagine glycans are attached at residues N377 and N422. Residues 431–466 (TSVGQMPGPAGPWPPSASPTAPPEPGPEAGSPQLRL) are disordered. Positions 439 to 456 (PAGPWPPSASPTAPPEPG) are enriched in pro residues. In terms of domain architecture, SRCR 4 spans 464–565 (LRLVAGPSRC…HNEDVGVTCT (102 aa)). Disulfide bonds link C489–C554, C502–C564, and C534–C544. The tract at residues 592-756 (WLPGELTTKP…AGVPVPSGPF (165 aa)) is disordered. Over residues 599 to 611 (TKPSASLTSSVPQ) the composition is skewed to polar residues. Positions 622 to 633 (KSTKKWVTKNAR) are enriched in basic residues. The span at 653–663 (TPTSLHPTART) shows a compositional bias: polar residues. Residues 665-676 (ELPKRLTTEAPH) are compositionally biased toward basic and acidic residues. Positions 698–740 (PVVSQSTQGPQEVTSEATTTENPQTSLEPSGENTEGSLESSQD) are enriched in polar residues. The segment covering 741 to 755 (PATTPTAGVPVPSGP) has biased composition (low complexity). An SRCR 5 domain is found at 758–858 (VRLADGPNRC…HEEDVVLTCT (101 aa)). Intrachain disulfides connect C783-C847, C796-C857, and C827-C837. Disordered stretches follow at residues 888-1270 (RPGH…PFGP) and 1351-1371 (STPVPMTTTTEEEERPLRGDV). Positions 894 to 912 (SWATTTNTEVPSPATQNLP) are enriched in polar residues. Composition is skewed to low complexity over residues 936–957 (KGTPTTTKPGSTVTTSTSKSPG), 981–1004 (PTSATTSSPASSSSPEPSGSRQTS), and 1018–1035 (GTSSSPKPSLLTPGLPSP). 2 stretches are compositionally biased toward polar residues: residues 1039–1086 (ALST…TSEL) and 1102–1148 (SSDS…NPQQ). Residues N1044 and N1131 are each glycosylated (N-linked (GlcNAc...) asparagine). Residues 1149 to 1163 (PRSPHPATSPQPPTN) are compositionally biased toward pro residues. The span at 1164-1189 (THPSSTPATPTESLPSSRKTELSSPT) shows a compositional bias: polar residues. A compositionally biased stretch (low complexity) spans 1218 to 1230 (ASESGPSSPSPAS). Residues 1244–1261 (RSQTLHSASDHLTQGPTP) show a composition bias toward polar residues.

As to quaternary structure, interacts with LGALS1 and laminin. Post-translationally, partially N- and O-glycosylated. As to expression, detected throughout the gastrointestinal and genitourinary tracts, in serosal salivary gland, the exocrine part of pancreas and testis, as well as in a few tubular structures in kidney. Not detected in lung and heart (at protein level). Strongly expressed in testis, kidney and pancreas, with lower levels detected in bone marrow, spleen, lung, liver, colon, stomach and skeletal muscle. Very low levels or no expression detected in thymus, esophagus, jejunum, ileum, duodenum, ovary, uterus, heart, trachea, brain, cerebellum and bladder.

It is found in the secreted. Its subcellular location is the cytoplasm. In terms of biological role, binds to extracellular matrix proteins. Binds to pathogen-associated molecular patterns (PAMPs) present on the cell walls of Gram-positive and Gram-negative bacteria and fungi, behaving as a pattern recognition receptor (PRR). Induces bacterial and fungal aggregation and subsequent inhibition of PAMP-induced cytokine release. Does not possess intrinsic bactericidal activity. May play a role in the innate defense and homeostasis of certain epithelial surfaces. The chain is Soluble scavenger receptor cysteine-rich domain-containing protein SSC5D (Ssc5d) from Mus musculus (Mouse).